Here is a 223-residue protein sequence, read N- to C-terminus: Uracil-DNA glycosylase (223 aa).

D67 acts as the Proton acceptor in catalysis.

It belongs to the uracil-DNA glycosylase (UDG) superfamily. UNG family.

The protein localises to the cytoplasm. The enzyme catalyses Hydrolyzes single-stranded DNA or mismatched double-stranded DNA and polynucleotides, releasing free uracil.. Functionally, excises uracil residues from the DNA which can arise as a result of misincorporation of dUMP residues by DNA polymerase or due to deamination of cytosine. This chain is Uracil-DNA glycosylase, found in Borrelia hermsii (strain HS1 / DAH).